A 321-amino-acid polypeptide reads, in one-letter code: Pectinesterase (321 aa).

T1 is modified (N-acetylthreonine). A glycan (N-linked (GlcNAc...) (complex) asparagine) is linked at N75. T84 and Q114 together coordinate substrate. Catalysis depends on D137, which acts as the Proton donor. C151 and C171 are disulfide-bonded. D158 serves as the catalytic Nucleophile. Substrate is bound by residues R226 and W228. N275, N290, and N319 each carry an N-linked (GlcNAc...) (complex) asparagine glycan.

The protein belongs to the pectinesterase family. Post-translationally, the N-glycans attached at Asn-75, Asn-275, Asn-290 and Asn-319 are complex oligosaccharides containing xylose, fucose, hexose and N-acetylglucosamine.

It carries out the reaction [(1-&gt;4)-alpha-D-galacturonosyl methyl ester](n) + n H2O = [(1-&gt;4)-alpha-D-galacturonosyl](n) + n methanol + n H(+). It participates in glycan metabolism; pectin degradation; 2-dehydro-3-deoxy-D-gluconate from pectin: step 1/5. With respect to regulation, inhibited by PMEI. This is Pectinesterase from Actinidia deliciosa (Kiwi).